The following is a 458-amino-acid chain: tRNA modification GTPase MnmE (458 aa).

(6S)-5-formyl-5,6,7,8-tetrahydrofolate contacts are provided by Arg22, Glu85, and Arg124. Residues 220-379 (GLATAIIGRP…LEEAISRLFF (160 aa)) enclose the TrmE-type G domain. Residue Asn230 coordinates K(+). GTP is bound by residues 230–235 (NVGKSS), 249–255 (TDIPGTT), and 274–277 (DTAG). Ser234 contacts Mg(2+). Thr249, Ile251, and Thr254 together coordinate K(+). Residue Thr255 participates in Mg(2+) binding. A (6S)-5-formyl-5,6,7,8-tetrahydrofolate-binding site is contributed by Lys458.

It belongs to the TRAFAC class TrmE-Era-EngA-EngB-Septin-like GTPase superfamily. TrmE GTPase family. In terms of assembly, homodimer. Heterotetramer of two MnmE and two MnmG subunits. K(+) serves as cofactor.

It localises to the cytoplasm. Its function is as follows. Exhibits a very high intrinsic GTPase hydrolysis rate. Involved in the addition of a carboxymethylaminomethyl (cmnm) group at the wobble position (U34) of certain tRNAs, forming tRNA-cmnm(5)s(2)U34. The polypeptide is tRNA modification GTPase MnmE (Shouchella clausii (strain KSM-K16) (Alkalihalobacillus clausii)).